A 1218-amino-acid polypeptide reads, in one-letter code: NACHT, LRR and PYD domains-containing protein 1a allele 4 (1218 aa).

Polar residues predominate over residues M1–T29. Disordered regions lie at residues M1–Q44 and E71–E91. The segment covering R77–L87 has biased composition (basic residues). Residues Q175–L484 enclose the NACHT domain. G181–S188 lines the ATP pocket. LRR repeat units follow at residues K343–C364, N673–C693, and R730–C750. The segment covering T799 to K815 has biased composition (polar residues). The segment at T799–V842 is disordered. Positions F835–F968 are ZU5. The region spanning F835–S1118 is the FIIND domain. The segment at S969–S1118 is UPA. In terms of domain architecture, CARD spans D1122–S1211.

This sequence belongs to the NLRP family. As to quaternary structure, interacts (via LRR repeats) with BCL2 and BCL2L1 (via the loop between motifs BH4 and BH3). Interacts with NOD2; this interaction is enhanced in the presence of muramyl dipeptide (MDP) and increases IL1B release. Interacts with EIF2AK2/PKR; this interaction requires EIF2AK2 activity, is accompanied by EIF2AK2 autophosphorylation and promotes inflammasome assembly in response to danger-associated signals. Interacts with MEFV; this interaction targets Nlrp1a to degradation by autophagy, hence preventing excessive IL1B- and IL18-mediated inflammation. Interacts with DPP9; leading to inhibit activation of the inflammasome. DPP9 acts via formation of a ternary complex, composed of a DPP9 homodimer, one full-length NLRP1 protein, and one cleaved C-terminus of Nlrp1a (NACHT, LRR and PYD domains-containing protein 1a, C-terminus). Interacts with DPP8; leading to inhibit activation of the inflammasome, probably via formation of a ternary complex with DPP8. Interacts with the C-terminal part of Nlrp1a (NACHT, LRR and PYD domains-containing protein 1a, C-terminus) in absence of pathogens and other damage-associated signals. In terms of assembly, interacts with the N-terminal part of Nlrp1a (NACHT, LRR and PYD domains-containing protein 1a, N-terminus) in absence of pathogens and other damage-associated signals. Homomultimer; forms the Nlrp1a inflammasome polymeric complex, a filament composed of homopolymers of this form in response to pathogens and other damage-associated signals. The Nlrp1a inflammasome polymeric complex directly recruits pro-caspase-1 (proCASP1) independently of PYCARD/ASC. Interacts (via CARD domain) with CASP1 (via CARD domain); leading to CASP1 activation. Autocatalytically cleaved. Autocatalytic cleavage in FIIND region occurs constitutively, prior to activation signals, and is required for inflammasome activity (IL1B release), possibly by facilitating CASP1 binding. Both N- and C-terminal parts remain associated non-covalently. In terms of processing, ubiquitinated in response to pathogen-associated signals, leading to its degradation by the proteasome and subsequent release of the cleaved C-terminal part of the protein (NACHT, LRR and PYD domains-containing protein 1a, C-terminus), which polymerizes and forms the Nlrp1a inflammasome.

It localises to the cytoplasm. It is found in the cytosol. The protein resides in the nucleus. Its subcellular location is the inflammasome. With respect to regulation, activated by pathogens and other damage-associated signals: activation promotes ubiquitination and degradation of the N-terminal part, releasing the cleaved C-terminal part of the protein (NACHT, LRR and PYD domains-containing protein 1a, C-terminus), which polymerizes and forms the Nlrp1a inflammasome. Nlrp1a inflammasome is inhibited by DPP8 and DPP9, which sequester the C-terminal fragment of Nlrp1a (NACHT, LRR and PYD domains-containing protein 1a, C-terminus) in a ternary complex, thereby preventing Nlrp1a oligomerization and activation. Nlrp1a inflammasome is strongly activated by Val-boroPro (Talabostat, PT-100), an inhibitor of dipeptidyl peptidases DPP8 and DPP9. Val-boroPro relieves inhibition of DPP8 and/or DPP9 by promoting disruption of the ternary complex, releasing its C-terminal part from autoinhibition. Not activated by cleavage by B.anthracis lethal toxin (LT) endopeptidase. Its function is as follows. Acts as the sensor component of the Nlrp1a inflammasome, which mediates inflammasome activation in response to various pathogen-associated signals, leading to subsequent pyroptosis. Inflammasomes are supramolecular complexes that assemble in the cytosol in response to pathogens and other damage-associated signals and play critical roles in innate immunity and inflammation. Acts as a recognition receptor (PRR): recognizes specific pathogens and other damage-associated signals, such as Val-boroPro inhibitor, and mediates the formation of the inflammasome polymeric complex. In response to pathogen-associated signals, the N-terminal part of Nlrp1a is degraded by the proteasome, releasing the cleaved C-terminal part of the protein (NACHT, LRR and PYD domains-containing protein 1a, C-terminus), which polymerizes to initiate the formation of the inflammasome complex: the inflammasome directly recruits pro-caspase-1 (proCASP1) independently of PYCARD/ASC and promotes caspase-1 (CASP1) activation, which subsequently cleaves and activates inflammatory cytokines IL1B and IL18 and gasdermin-D (GSDMD), leading to pyroptosis. In the absence of GSDMD expression, the Nlrp1a inflammasome is able to recruit and activate CASP8, leading to activation of gasdermin-E (GSDME). Constitutes the precursor of the Nlrp1a inflammasome, which mediates autoproteolytic processing within the FIIND domain to generate the N-terminal and C-terminal parts, which are associated non-covalently in absence of pathogens and other damage-associated signals. Functionally, regulatory part that prevents formation of the Nlrp1a inflammasome: in absence of pathogens and other damage-associated signals, interacts with the C-terminal part of Nlrp1a (NACHT, LRR and PYD domains-containing protein 1a, C-terminus), preventing activation of the Nlrp1a inflammasome. In response to pathogen-associated signals, this part is ubiquitinated by the N-end rule pathway and degraded by the proteasome, releasing the cleaved C-terminal part of the protein, which polymerizes and forms the Nlrp1a inflammasome. In terms of biological role, constitutes the active part of the Nlrp1a inflammasome. In absence of pathogens and other damage-associated signals, interacts with the N-terminal part of Nlrp1a (NACHT, LRR and PYD domains-containing protein 1a, N-terminus), preventing activation of the Nlrp1a inflammasome. In response to pathogen-associated signals, the N-terminal part of Nlrp1a is degraded by the proteasome, releasing this form, which polymerizes to form the Nlrp1a inflammasome complex: the Nlrp1a inflammasome complex then directly recruits pro-caspase-1 (proCASP1) and promotes caspase-1 (CASP1) activation, leading to gasdermin-D (GSDMD) cleavage and subsequent pyroptosis. The protein is NACHT, LRR and PYD domains-containing protein 1a allele 4 of Rattus norvegicus (Rat).